A 494-amino-acid polypeptide reads, in one-letter code: Putative NAD kinase 3 (494 aa).

Belongs to the NAD kinase family.

The enzyme catalyses NAD(+) + ATP = ADP + NADP(+) + H(+). The chain is Putative NAD kinase 3 from Oryza sativa subsp. japonica (Rice).